The chain runs to 206 residues: Large ribosomal subunit protein uL4 (206 aa).

The tract at residues 47–77 is disordered; it reads TRAQKGRSDVTGSTRKQWRQKGTGRARTGAA.

The protein belongs to the universal ribosomal protein uL4 family. As to quaternary structure, part of the 50S ribosomal subunit.

In terms of biological role, one of the primary rRNA binding proteins, this protein initially binds near the 5'-end of the 23S rRNA. It is important during the early stages of 50S assembly. It makes multiple contacts with different domains of the 23S rRNA in the assembled 50S subunit and ribosome. Its function is as follows. Forms part of the polypeptide exit tunnel. The polypeptide is Large ribosomal subunit protein uL4 (Nitrosomonas europaea (strain ATCC 19718 / CIP 103999 / KCTC 2705 / NBRC 14298)).